The chain runs to 202 residues: tRNA (guanine-N(7)-)-methyltransferase (202 aa).

Residues Glu34, Glu59, Asp86, and Asp107 each contribute to the S-adenosyl-L-methionine site. The active site involves Asp107. Residues Lys111, Asp143, and 181-184 (TDYE) contribute to the substrate site.

Belongs to the class I-like SAM-binding methyltransferase superfamily. TrmB family.

It catalyses the reaction guanosine(46) in tRNA + S-adenosyl-L-methionine = N(7)-methylguanosine(46) in tRNA + S-adenosyl-L-homocysteine. Its pathway is tRNA modification; N(7)-methylguanine-tRNA biosynthesis. Catalyzes the formation of N(7)-methylguanine at position 46 (m7G46) in tRNA. The sequence is that of tRNA (guanine-N(7)-)-methyltransferase from Metamycoplasma hominis (strain ATCC 23114 / DSM 25592 / NBRC 14850 / NCTC 10111 / PG21) (Mycoplasma hominis).